A 247-amino-acid chain; its full sequence is Carboxy-S-adenosyl-L-methionine synthase (247 aa).

Residues Tyr39, 64–66 (GCS), 89–90 (DN), 117–118 (DI), Asn132, and Arg199 contribute to the S-adenosyl-L-methionine site.

This sequence belongs to the class I-like SAM-binding methyltransferase superfamily. Cx-SAM synthase family. In terms of assembly, homodimer.

The catalysed reaction is prephenate + S-adenosyl-L-methionine = carboxy-S-adenosyl-L-methionine + 3-phenylpyruvate + H2O. Functionally, catalyzes the conversion of S-adenosyl-L-methionine (SAM) to carboxy-S-adenosyl-L-methionine (Cx-SAM). The chain is Carboxy-S-adenosyl-L-methionine synthase from Salmonella agona (strain SL483).